The chain runs to 156 residues: 6,7-dimethyl-8-ribityllumazine synthase (156 aa).

5-amino-6-(D-ribitylamino)uracil is bound by residues Phe-23, 57 to 59 (AFE), and 81 to 83 (AVI). 86–87 (AT) contacts (2S)-2-hydroxy-3-oxobutyl phosphate. The active-site Proton donor is the His-89. Asn-114 provides a ligand contact to 5-amino-6-(D-ribitylamino)uracil. (2S)-2-hydroxy-3-oxobutyl phosphate is bound at residue Arg-128.

The protein belongs to the DMRL synthase family.

The enzyme catalyses (2S)-2-hydroxy-3-oxobutyl phosphate + 5-amino-6-(D-ribitylamino)uracil = 6,7-dimethyl-8-(1-D-ribityl)lumazine + phosphate + 2 H2O + H(+). The protein operates within cofactor biosynthesis; riboflavin biosynthesis; riboflavin from 2-hydroxy-3-oxobutyl phosphate and 5-amino-6-(D-ribitylamino)uracil: step 1/2. Catalyzes the formation of 6,7-dimethyl-8-ribityllumazine by condensation of 5-amino-6-(D-ribitylamino)uracil with 3,4-dihydroxy-2-butanone 4-phosphate. This is the penultimate step in the biosynthesis of riboflavin. The polypeptide is 6,7-dimethyl-8-ribityllumazine synthase (Aliarcobacter butzleri (strain RM4018) (Arcobacter butzleri)).